Here is a 5121-residue protein sequence, read N- to C-terminus: Hydrocephalus-inducing protein homolog (5121 aa).

The interval 363–754 (EFFEECITDP…VLFSSPTPSG (392 aa)) is interaction with KIF9. Residues 956–967 (LSKKGRVKKGHA) are compositionally biased toward basic residues. Disordered regions lie at residues 956 to 987 (LSKK…SPVF), 1925 to 1951 (LAQE…TSLS), 2155 to 2186 (SKAD…LPPG), 2333 to 2459 (EQER…KFKT), 2482 to 2534 (LPPA…AERE), 2664 to 2684 (TNTT…KQKM), and 3852 to 3874 (KPDH…TGST). The stretch at 1908-1933 (EIKKSKEEQMRAKYLENLAQENEEED) forms a coiled coil. Residues 1936-1951 (SSDQGTSNSTKRTSLS) show a composition bias toward polar residues. A coiled-coil region spans residues 2267-2365 (AQDYAAMKAQ…EDELKRRVKK (99 aa)). Composition is skewed to basic and acidic residues over residues 2333–2360 (EQER…DELK), 2393–2418 (VDVK…EELN), 2444–2453 (DNSKDPDKQL), 2489–2498 (EAPHEPDDQR), and 2509–2534 (KDRE…AERE). Residues 2504-2549 (GRRGRKDRERERLEKERTEKERLEREKAERERLEKLRALEERSDWE) adopt a coiled-coil conformation. Composition is skewed to polar residues over residues 2664–2679 (TNTT…SSKG) and 3857–3874 (GSAQ…TGST).

Interacts with KIF9.

Its subcellular location is the cell projection. It localises to the cilium. The protein resides in the cytoplasm. The protein localises to the cytoskeleton. It is found in the cilium axoneme. Its subcellular location is the flagellum. Its function is as follows. Required for ciliary motility. The sequence is that of Hydrocephalus-inducing protein homolog (HYDIN) from Homo sapiens (Human).